The primary structure comprises 286 residues: CLA biosynthesis dehydrogenase/reductase (286 aa).

6 residues coordinate NAD(+): Asp37, Asp63, Val64, Asn90, Tyr156, and Lys160. Residue Tyr156 is the Proton acceptor of the active site.

Belongs to the short-chain dehydrogenases/reductases (SDR) family.

The protein localises to the cytoplasm. The catalysed reaction is (10S)-hydroxy-(12Z)-octadecenoate + NAD(+) = 10-oxo-(12Z)-octadecenoate + NADH + H(+). The enzyme catalyses 10-oxo-(11E)-octadecenoate + NADH + H(+) = 10-hydroxy-(11E)-octadecenoate + NAD(+). It carries out the reaction 10-oxooctadecanoate + NADH + H(+) = 10-hydroxyoctadecanoate + NAD(+). It participates in lipid metabolism; fatty acid metabolism. In terms of biological role, is involved in a saturation metabolic pathway of polyunsaturated fatty acids, that detoxifies unsaturated fatty acids and generates hydroxy fatty acids, oxo fatty acids, conjugated fatty acids such as conjugated linoleic acids (CLAs), and partially saturated trans-fatty acids as intermediates. CLA-DH catalyzes the dehydrogenation/reduction steps in the production of 10-oxo-(12Z)-octadecenoate, 10-hydroxy-(11E)-octadecenoate and 10-hydroxyoctadecanoate during linoleate metabolism. As part of the gut microbiome, this enzyme modifies host fatty acid composition and is expected to improve human health by altering lipid metabolism related to the onset of metabolic syndrome. In Lactiplantibacillus plantarum (Lactobacillus plantarum), this protein is CLA biosynthesis dehydrogenase/reductase.